The following is a 259-amino-acid chain: 3-deoxy-manno-octulosonate cytidylyltransferase (259 aa).

The protein belongs to the KdsB family.

It localises to the cytoplasm. It carries out the reaction 3-deoxy-alpha-D-manno-oct-2-ulosonate + CTP = CMP-3-deoxy-beta-D-manno-octulosonate + diphosphate. Its pathway is nucleotide-sugar biosynthesis; CMP-3-deoxy-D-manno-octulosonate biosynthesis; CMP-3-deoxy-D-manno-octulosonate from 3-deoxy-D-manno-octulosonate and CTP: step 1/1. The protein operates within bacterial outer membrane biogenesis; lipopolysaccharide biosynthesis. In terms of biological role, activates KDO (a required 8-carbon sugar) for incorporation into bacterial lipopolysaccharide in Gram-negative bacteria. The chain is 3-deoxy-manno-octulosonate cytidylyltransferase from Aeromonas salmonicida (strain A449).